The primary structure comprises 185 residues: Threonylcarbamoyl-AMP synthase (185 aa).

A YrdC-like domain is found at 4 to 185 (SFRAQCAARV…LVTGQVIRPA (182 aa)).

Belongs to the SUA5 family. TsaC subfamily.

The protein localises to the cytoplasm. It catalyses the reaction L-threonine + hydrogencarbonate + ATP = L-threonylcarbamoyladenylate + diphosphate + H2O. Functionally, required for the formation of a threonylcarbamoyl group on adenosine at position 37 (t(6)A37) in tRNAs that read codons beginning with adenine. Catalyzes the conversion of L-threonine, HCO(3)(-)/CO(2) and ATP to give threonylcarbamoyl-AMP (TC-AMP) as the acyladenylate intermediate, with the release of diphosphate. This is Threonylcarbamoyl-AMP synthase from Pseudomonas aeruginosa (strain UCBPP-PA14).